The chain runs to 293 residues: Probable porphobilinogen deaminase (293 aa).

At Cys-233 the chain carries S-(dipyrrolylmethanemethyl)cysteine.

The protein belongs to the HMBS family. The cofactor is dipyrromethane.

The enzyme catalyses 4 porphobilinogen + H2O = hydroxymethylbilane + 4 NH4(+). It participates in porphyrin-containing compound metabolism; protoporphyrin-IX biosynthesis; coproporphyrinogen-III from 5-aminolevulinate: step 2/4. Functionally, tetrapolymerization of the monopyrrole PBG into the hydroxymethylbilane pre-uroporphyrinogen in several discrete steps. This Saccharolobus islandicus (strain Y.G.57.14 / Yellowstone #1) (Sulfolobus islandicus) protein is Probable porphobilinogen deaminase.